The primary structure comprises 121 residues: Large ribosomal subunit protein eL8 (121 aa).

This sequence belongs to the eukaryotic ribosomal protein eL8 family. In terms of assembly, part of the 50S ribosomal subunit. Probably part of the RNase P complex.

It is found in the cytoplasm. In terms of biological role, multifunctional RNA-binding protein that recognizes the K-turn motif in ribosomal RNA, the RNA component of RNase P, box H/ACA, box C/D and box C'/D' sRNAs. This Thermoplasma volcanium (strain ATCC 51530 / DSM 4299 / JCM 9571 / NBRC 15438 / GSS1) protein is Large ribosomal subunit protein eL8.